The sequence spans 451 residues: Adenylyltransferase and sulfurtransferase MOCS3-2 (451 aa).

Residues 42–62 form a disordered region; it reads GEDSDEAEESSNDMPTPQTKL. The segment covering 43–52 has biased composition (acidic residues); the sequence is EDSDEAEESS. Residue threonine 60 is modified to Phosphothreonine. ATP is bound by residues glycine 99, aspartate 120, 127 to 131, lysine 144, and 188 to 189; these read SNLHR and DN. 2 residues coordinate Zn(2+): cysteine 229 and cysteine 232. Cysteine 246 functions as the Glycyl thioester intermediate; for adenylyltransferase activity in the catalytic mechanism. Positions 304 and 307 each coordinate Zn(2+). The region spanning 353–449 is the Rhodanese domain; that stretch reads QSQPHLLLDV…WTGSVDATFP (97 aa). Catalysis depends on cysteine 408, which acts as the Cysteine persulfide intermediate; for sulfurtransferase activity.

It in the N-terminal section; belongs to the HesA/MoeB/ThiF family. UBA4 subfamily. Requires Zn(2+) as cofactor.

Its subcellular location is the cytoplasm. It catalyses the reaction [molybdopterin-synthase sulfur-carrier protein]-C-terminal Gly-Gly + ATP + H(+) = [molybdopterin-synthase sulfur-carrier protein]-C-terminal Gly-Gly-AMP + diphosphate. It carries out the reaction [molybdopterin-synthase sulfur-carrier protein]-C-terminal Gly-Gly-AMP + S-sulfanyl-L-cysteinyl-[cysteine desulfurase] + AH2 = [molybdopterin-synthase sulfur-carrier protein]-C-terminal-Gly-aminoethanethioate + L-cysteinyl-[cysteine desulfurase] + A + AMP + 2 H(+). The protein operates within tRNA modification; 5-methoxycarbonylmethyl-2-thiouridine-tRNA biosynthesis. It functions in the pathway cofactor biosynthesis; molybdopterin biosynthesis. Functionally, plays a central role in 2-thiolation of mcm(5)S(2)U at tRNA wobble positions of cytosolic tRNA(Lys), tRNA(Glu) and tRNA(Gln). Also essential during biosynthesis of the molybdenum cofactor. Acts by mediating the C-terminal thiocarboxylation of sulfur carriers URM1 and MOCS2A. Its N-terminus first activates URM1 and MOCS2A as acyl-adenylates (-COAMP), then the persulfide sulfur on the catalytic cysteine is transferred to URM1 and MOCS2A to form thiocarboxylation (-COSH) of their C-terminus. The reaction probably involves hydrogen sulfide that is generated from the persulfide intermediate and that acts as a nucleophile towards URM1 and MOCS2A. Subsequently, a transient disulfide bond is formed. Does not use thiosulfate as sulfur donor; NFS1 probably acting as a sulfur donor for thiocarboxylation reactions. The sequence is that of Adenylyltransferase and sulfurtransferase MOCS3-2 from Drosophila pseudoobscura pseudoobscura (Fruit fly).